The primary structure comprises 519 residues: Glucoamylase GLA1 (519 aa).

Residues 1–27 (MRFGVLISVFVAIVSALPLQEGPLNKR) form the signal peptide. N-linked (GlcNAc...) asparagine glycosylation is found at Asn115 and Asn127. Trp166 serves as a coordination point for substrate. N-linked (GlcNAc...) asparagine glycosylation occurs at Asn205. Asp234 acts as the Proton acceptor in catalysis. Glu237 functions as the Proton donor in the catalytic mechanism.

It belongs to the glycosyl hydrolase 15 family.

It catalyses the reaction Hydrolysis of terminal (1-&gt;4)-linked alpha-D-glucose residues successively from non-reducing ends of the chains with release of beta-D-glucose.. The sequence is that of Glucoamylase GLA1 (GLA1) from Saccharomycopsis fibuligera (Yeast).